A 380-amino-acid chain; its full sequence is Interleukin-13 receptor subunit alpha-2 (380 aa).

Positions 1 to 26 are cleaved as a signal peptide; that stretch reads MAFVCLAIGCLYTFLISTTFGCTSSS. At 27-343 the chain is on the extracellular side; that stretch reads DTEIKVNPPQ…EDLSKKTLLR (317 aa). Fibronectin type-III domains lie at 34 to 134, 139 to 235, and 240 to 333; these read PPQD…SPQG, KVQD…LQNI, and PPVY…CWEG. An intrachain disulfide couples cysteine 65 to cysteine 113. An N-linked (GlcNAc...) asparagine glycan is attached at asparagine 115. 2 disulfides stabilise this stretch: cysteine 145–cysteine 155 and cysteine 184–cysteine 197. Asparagine 215, asparagine 290, and asparagine 299 each carry an N-linked (GlcNAc...) asparagine glycan. A disulfide bridge links cysteine 269 with cysteine 316. The short motif at 322 to 326 is the WSXWS motif element; the sequence is WSEWS. The chain crosses the membrane as a helical span at residues 344-363; the sequence is FWLPFGFILILVIFVTGLLL. At 364–380 the chain is on the cytoplasmic side; sequence RKPNTYPKMIPEFFCDT.

Belongs to the type I cytokine receptor family. Type 5 subfamily. As to quaternary structure, interacts with IL4RA. Interacts with high affinity to interleukin-13 (IL13), but not to interleukin-4 (IL4). Cleaved by MMP8 leading to a soluble form that is also able to interact with IL13.

The protein resides in the cell membrane. In terms of biological role, cell surface receptor that plays a role in the regulation of IL-13-mediated responses. Functions as a decoy receptor that inhibits IL-13- and IL-4-mediated signal transduction via the JAK-STAT pathway and thereby modulates immune responses and inflammation. Serves as a functional signaling receptor for IL-13 in an alternative pathway involving AP-1 ultimately leading to the production of TGFB1. The polypeptide is Interleukin-13 receptor subunit alpha-2 (IL13RA2) (Homo sapiens (Human)).